Reading from the N-terminus, the 613-residue chain is Proteasome-associated ATPase (613 aa).

The segment at 1-29 is disordered; that stretch reads MSESERSEGFPEGFAGAGSGSLSSEDAAE. A coiled-coil region spans residues 23–100; it reads SSEDAAELEA…LREEVDRLGQ (78 aa). 300 to 305 contributes to the ATP binding site; that stretch reads GCGKTL. Lys-595 participates in a covalent cross-link: Isoglutamyl lysine isopeptide (Lys-Gln) (interchain with Q-Cter in protein Pup). The segment at 612–613 is docks into pockets in the proteasome alpha-ring; that stretch reads YL.

The protein belongs to the AAA ATPase family. Homohexamer. Assembles into a hexameric ring structure that caps the 20S proteasome core. Strongly interacts with the prokaryotic ubiquitin-like protein Pup through a hydrophobic interface; the interacting region of ARC lies in its N-terminal coiled-coil domain. There is one Pup binding site per ARC hexamer ring. Upon ATP-binding, the C-terminus of ARC interacts with the alpha-rings of the proteasome core, possibly by binding to the intersubunit pockets.

Its pathway is protein degradation; proteasomal Pup-dependent pathway. ATPase which is responsible for recognizing, binding, unfolding and translocation of pupylated proteins into the bacterial 20S proteasome core particle. May be essential for opening the gate of the 20S proteasome via an interaction with its C-terminus, thereby allowing substrate entry and access to the site of proteolysis. Thus, the C-termini of the proteasomal ATPase may function like a 'key in a lock' to induce gate opening and therefore regulate proteolysis. This Mycolicibacterium smegmatis (strain ATCC 700084 / mc(2)155) (Mycobacterium smegmatis) protein is Proteasome-associated ATPase.